The primary structure comprises 55 residues: MKKLTDKQKSRLWELQRNRNFQASRRLEGVEMPLVTLTAAEALARLEELRSHYER.

This is an uncharacterized protein from Escherichia coli (strain K12).